Reading from the N-terminus, the 375-residue chain is Actin-related protein T1 (375 aa).

This sequence belongs to the actin family.

The protein resides in the cytoplasm. Its subcellular location is the cytoskeleton. The protein localises to the nucleus. It localises to the cytoplasmic vesicle. It is found in the secretory vesicle. The protein resides in the acrosome. Functionally, negatively regulates the Hedgehog (SHH) signaling. Binds to the promoter of the SHH signaling mediator, GLI1, and inhibits its expression. The chain is Actin-related protein T1 (ACTRT1) from Macaca fascicularis (Crab-eating macaque).